The sequence spans 205 residues: Probable thymidylate kinase (205 aa).

10 to 17 (GIDGSGKS) serves as a coordination point for ATP.

This sequence belongs to the thymidylate kinase family.

The enzyme catalyses dTMP + ATP = dTDP + ADP. This is Probable thymidylate kinase from Methanosarcina barkeri (strain Fusaro / DSM 804).